Here is a 452-residue protein sequence, read N- to C-terminus: C4-dicarboxylate transport protein 1 (452 aa).

Transmembrane regions (helical) follow at residues 18 to 38 (FQVV…PSVG), 51 to 71 (LIKM…IAGM), 83 to 103 (LALL…LLLV), 151 to 171 (AFAK…GFAL), 191 to 211 (VLFT…FGAM), 229 to 249 (LMGA…GAIA), 304 to 324 (GYSF…VFIA), 337 to 357 (ITLL…TGSG), and 359 to 379 (IVLA…LALI). The interval 426–452 (WEEAQEPERVLDKKTEHMPVSAMSDAG) is disordered. A compositionally biased stretch (basic and acidic residues) spans 431–442 (EPERVLDKKTEH).

Belongs to the dicarboxylate/amino acid:cation symporter (DAACS) (TC 2.A.23) family.

It is found in the cell inner membrane. In terms of biological role, responsible for the transport of dicarboxylates such as succinate, fumarate, and malate from the periplasm across the membrane. The sequence is that of C4-dicarboxylate transport protein 1 from Polaromonas naphthalenivorans (strain CJ2).